Here is an 87-residue protein sequence, read N- to C-terminus: DNA-directed RNA polymerase subunit Rpo5 (87 aa).

This sequence belongs to the archaeal Rpo5/eukaryotic RPB5 RNA polymerase subunit family. In terms of assembly, part of the RNA polymerase complex.

The protein localises to the cytoplasm. It catalyses the reaction RNA(n) + a ribonucleoside 5'-triphosphate = RNA(n+1) + diphosphate. Functionally, DNA-dependent RNA polymerase (RNAP) catalyzes the transcription of DNA into RNA using the four ribonucleoside triphosphates as substrates. This chain is DNA-directed RNA polymerase subunit Rpo5, found in Thermoplasma acidophilum (strain ATCC 25905 / DSM 1728 / JCM 9062 / NBRC 15155 / AMRC-C165).